A 122-amino-acid chain; its full sequence is Large ribosomal subunit protein uL14c (122 aa).

The protein belongs to the universal ribosomal protein uL14 family. Part of the 50S ribosomal subunit.

It is found in the plastid. It localises to the chloroplast. Its function is as follows. Binds to 23S rRNA. The protein is Large ribosomal subunit protein uL14c of Porphyra purpurea (Red seaweed).